The primary structure comprises 305 residues: Aquaporin-1 (305 aa).

The segment at 1–34 is disordered; sequence MSSNDSNDTDKQHTRLDPTGVDDAYIPPEQPETK. Residues 1-48 are Cytoplasmic-facing; it reads MSSNDSNDTDKQHTRLDPTGVDDAYIPPEQPETKHHRFKISRDTLRDH. Residues 49–69 form a helical membrane-spanning segment; that stretch reads FIAAVGEFCGTFMFLWCAYVI. At 70-91 the chain is on the extracellular side; that stretch reads CNVANHDVALVAAPDGSHPGQL. A helical membrane pass occupies residues 92 to 112; the sequence is IMIAIGFGFSVMFSIWCFAGV. At 113 to 136 the chain is on the cytoplasmic side; that stretch reads SGGALNPAMSLSLCLARAVSPTRC. The NPA 1 motif lies at 118–120; sequence NPA. A helical membrane pass occupies residues 137-157; that stretch reads VVMWVSQIVAGMAAGGAASAM. The Extracellular segment spans residues 158-176; the sequence is TPGEVLFANSLGLGCSRTR. The chain crosses the membrane as a helical span at residues 177–197; it reads GLFLEMFGTAILCLTVLMTAV. Residues 198-203 are Cytoplasmic-facing; sequence EKRETN. A helical membrane pass occupies residues 204 to 224; the sequence is FMAALPIGISLFIAHVALTAY. Residues 225-248 are Extracellular-facing; it reads TGTGVNPARSLGAAVAARYFPHYH. Residues 230–232 carry the NPA 2 motif; it reads NPA. Residues 249-269 traverse the membrane as a helical segment; it reads WIYWIGTLLGSILAWSVWQLL. Topologically, residues 270 to 305 are cytoplasmic; it reads QILDYTTYVTAEKAASTKEKAQKKGETSSSSAVAEV. Positions 286–295 are enriched in basic and acidic residues; it reads TKEKAQKKGE. Positions 286-305 are disordered; that stretch reads TKEKAQKKGETSSSSAVAEV. Residues 296 to 305 are compositionally biased toward polar residues; it reads TSSSSAVAEV.

This sequence belongs to the MIP/aquaporin (TC 1.A.8) family.

The protein localises to the endoplasmic reticulum membrane. It is found in the cell membrane. Water channel required to facilitate the transport of water across membranes. Involved in sporulation, freeze tolerance and osmotolerance. Is non-functional in most laboratory strains. The protein is Aquaporin-1 (AQY1) of Saccharomyces cerevisiae (strain ATCC 204508 / S288c) (Baker's yeast).